We begin with the raw amino-acid sequence, 381 residues long: Secretion apparatus protein BsaZ (381 aa).

A run of 4 helical transmembrane segments spans residues 28 to 48 (IVAL…VDLT), 80 to 100 (IAAP…LVQS), 134 to 154 (AVKA…FADL), and 175 to 195 (IVLT…VLIV). The disordered stretch occupies residues 343–381 (NRGGPPREMPPEATHAPDAHGGDAASGGATSAQAGERNA). Low complexity predominate over residues 364–381 (GDAASGGATSAQAGERNA).

The protein belongs to the type III secretion exporter family.

The protein localises to the cell membrane. Functionally, part of the bsa type III secretion system, is involved in the intracellular replication of invading bacteria inside the host cell. Probably necessary for the lysis of the vacuole membrane and escape into the host cell cytoplasm. This Burkholderia thailandensis (strain ATCC 700388 / DSM 13276 / CCUG 48851 / CIP 106301 / E264) protein is Secretion apparatus protein BsaZ (bsaZ).